The following is a 318-amino-acid chain: Protein phosphatase 1 regulatory subunit 3C (318 aa).

A PP1-binding motif motif is present at residues 84 to 87; it reads RVVF. Residues 141-263 form an interaction with EPM2A region; sequence PSADYLSFRN…YRIVHVQWKP (123 aa). The CBM21 domain occupies 149-257; it reads RNHFQKNSVC…NNEGQNYRIV (109 aa).

As to quaternary structure, interacts with PPP1CC catalytic subunit of PP1 and associates with glycogen. Forms complexes with glycogen phosphorylase, glycogen synthase and phosphorylase kinase which is necessary for its regulation of PP1 activity. Also interacts with EPM2A/laforin. Ubiquitinated by NHLRC1/malin in a EPM2A/laforin-dependent manner.

In terms of biological role, acts as a glycogen-targeting subunit for PP1 and regulates its activity. Activates glycogen synthase, reduces glycogen phosphorylase activity and limits glycogen breakdown. Dramatically increases basal and insulin-stimulated glycogen synthesis upon overexpression in a variety of cell types. In Bos taurus (Bovine), this protein is Protein phosphatase 1 regulatory subunit 3C.